Reading from the N-terminus, the 634-residue chain is DNA-directed RNA polymerase subunit gamma (634 aa).

4 residues coordinate Zn(2+): Cys74, Cys76, Cys89, and Cys92. Residues Asp471, Asp473, and Asp475 each coordinate Mg(2+).

The protein belongs to the RNA polymerase beta' chain family. RpoC1 subfamily. In terms of assembly, in cyanobacteria the RNAP catalytic core is composed of 2 alpha, 1 beta, 1 beta', 1 gamma and 1 omega subunit. When a sigma factor is associated with the core the holoenzyme is formed, which can initiate transcription. Requires Mg(2+) as cofactor. The cofactor is Zn(2+).

The catalysed reaction is RNA(n) + a ribonucleoside 5'-triphosphate = RNA(n+1) + diphosphate. Functionally, DNA-dependent RNA polymerase catalyzes the transcription of DNA into RNA using the four ribonucleoside triphosphates as substrates. The chain is DNA-directed RNA polymerase subunit gamma from Prochlorococcus marinus (strain MIT 9215).